The primary structure comprises 155 residues: SsrA-binding protein (155 aa).

The span at 127–149 shows a compositional bias: basic and acidic residues; it reads KKDYDKRNDMRKKEAKREMERTF. Residues 127–155 form a disordered region; that stretch reads KKDYDKRNDMRKKEAKREMERTFKSKNQY.

It belongs to the SmpB family.

It is found in the cytoplasm. Required for rescue of stalled ribosomes mediated by trans-translation. Binds to transfer-messenger RNA (tmRNA), required for stable association of tmRNA with ribosomes. tmRNA and SmpB together mimic tRNA shape, replacing the anticodon stem-loop with SmpB. tmRNA is encoded by the ssrA gene; the 2 termini fold to resemble tRNA(Ala) and it encodes a 'tag peptide', a short internal open reading frame. During trans-translation Ala-aminoacylated tmRNA acts like a tRNA, entering the A-site of stalled ribosomes, displacing the stalled mRNA. The ribosome then switches to translate the ORF on the tmRNA; the nascent peptide is terminated with the 'tag peptide' encoded by the tmRNA and targeted for degradation. The ribosome is freed to recommence translation, which seems to be the essential function of trans-translation. In Lysinibacillus sphaericus (strain C3-41), this protein is SsrA-binding protein.